A 167-amino-acid polypeptide reads, in one-letter code: Peroxiredoxin Pen c 3 (167 aa).

Residues 3–167 (LKAGDSFPEG…SRADHVLKQL (165 aa)) form the Thioredoxin domain. C60 (cysteine sulfenic acid (-SOH) intermediate) is an active-site residue.

It belongs to the peroxiredoxin family. Prx5 subfamily. As to quaternary structure, homodimer; disulfide-linked, upon oxidation.

It catalyses the reaction a hydroperoxide + [thioredoxin]-dithiol = an alcohol + [thioredoxin]-disulfide + H2O. Thiol-specific peroxidase that catalyzes the reduction of hydrogen peroxide and organic hydroperoxides to water and alcohols, respectively. Plays a role in cell protection against oxidative stress by detoxifying peroxides and as sensor of hydrogen peroxide-mediated signaling events. This chain is Peroxiredoxin Pen c 3, found in Penicillium citrinum.